A 315-amino-acid chain; its full sequence is Methionyl-tRNA formyltransferase (315 aa).

112–115 is a (6S)-5,6,7,8-tetrahydrofolate binding site; that stretch reads SLLP.

It belongs to the Fmt family.

It catalyses the reaction L-methionyl-tRNA(fMet) + (6R)-10-formyltetrahydrofolate = N-formyl-L-methionyl-tRNA(fMet) + (6S)-5,6,7,8-tetrahydrofolate + H(+). In terms of biological role, attaches a formyl group to the free amino group of methionyl-tRNA(fMet). The formyl group appears to play a dual role in the initiator identity of N-formylmethionyl-tRNA by promoting its recognition by IF2 and preventing the misappropriation of this tRNA by the elongation apparatus. This is Methionyl-tRNA formyltransferase from Leptospira interrogans serogroup Icterohaemorrhagiae serovar copenhageni (strain Fiocruz L1-130).